A 177-amino-acid chain; its full sequence is Eggshell protein (177 aa).

An N-terminal signal peptide occupies residues 1 to 18; sequence MKQSLTLVFLVAIGYATA. 5 tandem repeats follow at residues 25–41, 42–59, 60–75, 76–91, and 92–112. Residues 25 to 112 form a 5 X approximate tandem repeats region; sequence YSGGYGGGCY…GCSGGNCGGG (88 aa). The span at 149–166 shows a compositional bias: gly residues; that stretch reads GSGKGKGGGKGGKGGKGG. The disordered stretch occupies residues 149 to 177; it reads GSGKGKGGGKGGKGGKGGTYKPSHYGGGY.

In Schistosoma mansoni (Blood fluke), this protein is Eggshell protein (F10).